We begin with the raw amino-acid sequence, 131 residues long: uncharacterized protein (131 aa).

The segment at V64–G81 adopts a CCHC-type; degenerate zinc-finger fold.

This is an uncharacterized protein from Homo sapiens (Human).